The chain runs to 224 residues: Transmembrane protein C16orf54 (224 aa).

A glycan (O-linked (GalNAc...) threonine) is linked at T4. The chain crosses the membrane as a helical span at residues 32–52; sequence IPIMLVLATLAALFILTTAVL. 2 disordered regions span residues 104–138 and 152–203; these read TDRAPEPPTQVGTLEARATAPPAPSAPNSAPSNLG and WGPQ…GLQP. T112 and T116 each carry phosphothreonine. S194 is modified (phosphoserine).

O-glycosylated with core 1 or possibly core 8 glycans.

The protein localises to the membrane. This chain is Transmembrane protein C16orf54 (C16orf54), found in Homo sapiens (Human).